Here is a 487-residue protein sequence, read N- to C-terminus: Probable cytochrome P450 513B1 (487 aa).

A helical transmembrane segment spans residues 1-18; the sequence is MNLLVLSVILAIIIYLIF. A heme-binding site is contributed by Cys-433.

This sequence belongs to the cytochrome P450 family. Heme serves as cofactor.

Its subcellular location is the membrane. In Dictyostelium discoideum (Social amoeba), this protein is Probable cytochrome P450 513B1 (cyp513B1).